A 437-amino-acid chain; its full sequence is C-terminal-binding protein 2 (437 aa).

NAD(+) is bound by residues serine 103, 183–188 (IGLGRI), aspartate 207, 240–246 (CNLNEHN), 267–269 (TAR), and aspartate 293. Residue arginine 269 is part of the active site. The active site involves glutamate 298. The active-site Proton donor is the histidine 318. 318–321 (HTAW) serves as a coordination point for NAD(+). A disordered region spans residues 410–437 (PLIPSVSHTPSPGQTTKPDPDREIPTDQ). Positions 415–426 (VSHTPSPGQTTK) are enriched in polar residues. Positions 427–437 (PDPDREIPTDQ) are enriched in basic and acidic residues.

Belongs to the D-isomer specific 2-hydroxyacid dehydrogenase family. In terms of assembly, interacts with the C-terminus of tcf7l1-a via the consensus motifs P-X-[DNS]-L-[STVA].

Its subcellular location is the nucleus. In terms of biological role, corepressor targeting diverse transcription regulators. In Xenopus laevis (African clawed frog), this protein is C-terminal-binding protein 2 (ctbp2).